The primary structure comprises 308 residues: Dioxygenase peniF (308 aa).

Residues His-144 and His-225 each contribute to the Fe cation site.

Belongs to the PhyH family. In terms of assembly, homodimer. Fe cation serves as cofactor.

Functionally, dioxygenase; part of the gene cluster that mediates the biosynthesis of penifulvin A, a potent insecticidal sesquiterpene that features a [5.5.5.6]dioxafenestrane ring. The first step of the pathway is performed by the sesquiterpene cyclase peniA that generates the angular triquinane scaffold silphinene via cyclization of the linear farnesyl pyrophosphate (FPP). The cytochrome P450 monooxygenase peniB and the flavin-dependent monooxygenase peniC then catalyze a series of oxidation reactions to transform silphinene into penifulvin A. The dioxygenases peniD and peniF, as well as the acetyltransferase peniE, do not seem to be involved in the biosynthesis of penifulvin A. The sequence is that of Dioxygenase peniF from Penicillium patulum (Penicillium griseofulvum).